A 99-amino-acid chain; its full sequence is Small ribosomal subunit protein bS6c (99 aa).

This sequence belongs to the bacterial ribosomal protein bS6 family.

The protein localises to the plastid. Its subcellular location is the chloroplast. Binds together with bS18 to 16S ribosomal RNA. The sequence is that of Small ribosomal subunit protein bS6c from Cyanidioschyzon merolae (strain NIES-3377 / 10D) (Unicellular red alga).